We begin with the raw amino-acid sequence, 433 residues long: ATP-dependent protease ATPase subunit HslU (433 aa).

Residues Val-18, 60–65 (GVGKTE), Asp-246, Glu-311, and Arg-383 contribute to the ATP site.

The protein belongs to the ClpX chaperone family. HslU subfamily. In terms of assembly, a double ring-shaped homohexamer of HslV is capped on each side by a ring-shaped HslU homohexamer. The assembly of the HslU/HslV complex is dependent on binding of ATP.

The protein resides in the cytoplasm. Its function is as follows. ATPase subunit of a proteasome-like degradation complex; this subunit has chaperone activity. The binding of ATP and its subsequent hydrolysis by HslU are essential for unfolding of protein substrates subsequently hydrolyzed by HslV. HslU recognizes the N-terminal part of its protein substrates and unfolds these before they are guided to HslV for hydrolysis. This chain is ATP-dependent protease ATPase subunit HslU, found in Rhodopseudomonas palustris (strain BisA53).